An 822-amino-acid chain; its full sequence is Coiled-coil domain-containing protein 175 (822 aa).

Coiled-coil stretches lie at residues 129-164 (IIEISQIKRKIETMNNEVKFLTNKISELKSMNEVLG), 223-397 (IEKQ…KQMM), and 510-537 (HLIETLKEQLAQDKKDYVKKEERLIEEL).

The chain is Coiled-coil domain-containing protein 175 (Ccdc175) from Mus musculus (Mouse).